The sequence spans 177 residues: Inorganic pyrophosphatase (177 aa).

Substrate is bound by residues lysine 31, arginine 45, and tyrosine 57. Mg(2+) is bound by residues aspartate 67, aspartate 72, and aspartate 104. Residue tyrosine 142 participates in substrate binding.

The protein belongs to the PPase family. As to quaternary structure, homohexamer. Requires Mg(2+) as cofactor.

The protein resides in the cytoplasm. The enzyme catalyses diphosphate + H2O = 2 phosphate + H(+). Catalyzes the hydrolysis of inorganic pyrophosphate (PPi) forming two phosphate ions. The polypeptide is Inorganic pyrophosphatase (Neisseria meningitidis serogroup B (strain ATCC BAA-335 / MC58)).